A 444-amino-acid polypeptide reads, in one-letter code: Radical S-adenosyl methionine domain-containing protein 1, mitochondrial (444 aa).

Residues 1-39 constitute a mitochondrion transit peptide; that stretch reads MSTRVLTLTLLKKRHLMQCFWSTVGSVHLRSIASDKIPS. Positions 40–274 constitute a Radical SAM core domain; it reads HAVEASLYVH…CRVLEESGFH (235 aa). Tyr-47 is an S-adenosyl-L-methionine binding site. 3 residues coordinate [4Fe-4S] cluster: Cys-53, Cys-57, and Cys-60. S-adenosyl-L-methionine is bound by residues Gly-102, 103–104, Glu-135, Gln-162, Arg-174, and Asp-199; that span reads GT.

This sequence belongs to the anaerobic coproporphyrinogen-III oxidase family. HemW subfamily. Requires [4Fe-4S] cluster as cofactor.

The protein resides in the mitochondrion. May be a heme chaperone, appears to bind heme. Homologous bacterial proteins do not have oxygen-independent coproporphyrinogen-III oxidase activity. Binds 1 [4Fe-4S] cluster. The cluster is coordinated with 3 cysteines and an exchangeable S-adenosyl-L-methionine. This chain is Radical S-adenosyl methionine domain-containing protein 1, mitochondrial (rsad1), found in Danio rerio (Zebrafish).